The chain runs to 345 residues: Biotin synthase (345 aa).

A Radical SAM core domain is found at 59–286; sequence NEVQLSTLLS…TTMVRLSAGR (228 aa). [4Fe-4S] cluster contacts are provided by Cys74, Cys78, and Cys81. [2Fe-2S] cluster contacts are provided by Cys118, Cys149, Cys209, and Arg281.

The protein belongs to the radical SAM superfamily. Biotin synthase family. Homodimer. The cofactor is [4Fe-4S] cluster. [2Fe-2S] cluster serves as cofactor.

It carries out the reaction (4R,5S)-dethiobiotin + (sulfur carrier)-SH + 2 reduced [2Fe-2S]-[ferredoxin] + 2 S-adenosyl-L-methionine = (sulfur carrier)-H + biotin + 2 5'-deoxyadenosine + 2 L-methionine + 2 oxidized [2Fe-2S]-[ferredoxin]. Its pathway is cofactor biosynthesis; biotin biosynthesis; biotin from 7,8-diaminononanoate: step 2/2. Its function is as follows. Catalyzes the conversion of dethiobiotin (DTB) to biotin by the insertion of a sulfur atom into dethiobiotin via a radical-based mechanism. This is Biotin synthase from Leptothrix cholodnii (strain ATCC 51168 / LMG 8142 / SP-6) (Leptothrix discophora (strain SP-6)).